A 411-amino-acid chain; its full sequence is GTPase Obg (411 aa).

In terms of domain architecture, Obg spans 1 to 157 (MQFIDEARFV…REIRLELRVL (157 aa)). A disordered region spans residues 20–45 (AVSFHREKYRPRGGPDGGRGGDGGSV). A compositionally biased stretch (gly residues) spans 33 to 43 (GPDGGRGGDGG). In terms of domain architecture, OBG-type G spans 158–330 (SDVGLVGLPN…LERSAEAAPR (173 aa)). GTP contacts are provided by residues 164 to 171 (GLPNAGKS), 189 to 193 (FTTLT), 212 to 215 (DIPG), 276 to 279 (NKVD), and 311 to 313 (ARL). Ser-171 and Thr-191 together coordinate Mg(2+). Residues 335 to 411 (VFRPSWRGLR…RIGDVSFEFR (77 aa)) enclose the OCT domain.

This sequence belongs to the TRAFAC class OBG-HflX-like GTPase superfamily. OBG GTPase family. As to quaternary structure, monomer. Requires Mg(2+) as cofactor.

The protein localises to the cytoplasm. An essential GTPase which binds GTP, GDP and possibly (p)ppGpp with moderate affinity, with high nucleotide exchange rates and a fairly low GTP hydrolysis rate. Plays a role in control of the cell cycle, stress response, ribosome biogenesis and in those bacteria that undergo differentiation, in morphogenesis control. The sequence is that of GTPase Obg from Rubrobacter xylanophilus (strain DSM 9941 / JCM 11954 / NBRC 16129 / PRD-1).